Reading from the N-terminus, the 555-residue chain is Arginine--tRNA ligase (555 aa).

Positions 117–127 (ANPNGPLHVGH) match the 'HIGH' region motif.

The protein belongs to the class-I aminoacyl-tRNA synthetase family.

The protein localises to the cytoplasm. It carries out the reaction tRNA(Arg) + L-arginine + ATP = L-arginyl-tRNA(Arg) + AMP + diphosphate. The sequence is that of Arginine--tRNA ligase from Methanospirillum hungatei JF-1 (strain ATCC 27890 / DSM 864 / NBRC 100397 / JF-1).